The primary structure comprises 213 residues: Putative manganese efflux pump MntP (213 aa).

Helical transmembrane passes span 6-26 (LGVL…GIGM), 34-54 (AFML…FGIL), 58-78 (ALGL…LFFL), 107-127 (GSGG…LFAP), 132-152 (LVVI…SLGT), 153-173 (VGAQ…IMTV), and 192-212 (LAGG…SASP).

Belongs to the MntP (TC 9.B.29) family.

It localises to the cell membrane. In terms of biological role, probably functions as a manganese efflux pump. The chain is Putative manganese efflux pump MntP from Heliobacterium modesticaldum (strain ATCC 51547 / Ice1).